A 182-amino-acid polypeptide reads, in one-letter code: Orotate phosphoribosyltransferase (182 aa).

5-phospho-alpha-D-ribose 1-diphosphate contacts are provided by residues Arg-93, Lys-94, Lys-97, and 119–127 (EDIATTGTS). Thr-123 and Arg-151 together coordinate orotate.

Belongs to the purine/pyrimidine phosphoribosyltransferase family. PyrE subfamily. As to quaternary structure, homodimer. Mg(2+) serves as cofactor.

The catalysed reaction is orotidine 5'-phosphate + diphosphate = orotate + 5-phospho-alpha-D-ribose 1-diphosphate. Its pathway is pyrimidine metabolism; UMP biosynthesis via de novo pathway; UMP from orotate: step 1/2. Its function is as follows. Catalyzes the transfer of a ribosyl phosphate group from 5-phosphoribose 1-diphosphate to orotate, leading to the formation of orotidine monophosphate (OMP). In Haloquadratum walsbyi (strain DSM 16790 / HBSQ001), this protein is Orotate phosphoribosyltransferase.